We begin with the raw amino-acid sequence, 394 residues long: Glycerol-3-phosphate dehydrogenase [NAD(+)] 2 (394 aa).

NAD(+) is bound by residues 41–46 (GSGNWG), Lys152, and Ala185. Position 152 (Lys152) interacts with substrate. Lys243 (proton acceptor) is an active-site residue. 2 residues coordinate NAD(+): Arg308 and Gln337. 308–309 (RN) serves as a coordination point for substrate.

This sequence belongs to the NAD-dependent glycerol-3-phosphate dehydrogenase family.

It catalyses the reaction sn-glycerol 3-phosphate + NAD(+) = dihydroxyacetone phosphate + NADH + H(+). This chain is Glycerol-3-phosphate dehydrogenase [NAD(+)] 2 (gpd2), found in Cyberlindnera jadinii (Torula yeast).